The sequence spans 86 residues: Cytochrome c oxidase subunit 6B1 (86 aa).

At A2 the chain carries N-acetylalanine. In terms of domain architecture, CHCH spans 27-73; sequence TRNCWQNYLDFHRCQKAMTAKGGDISVCEWYQRVYQSLCPTSWVTDW. Positions 30–40 match the Cx9C motif motif; it reads CWQNYLDFHRC. 2 disulfides stabilise this stretch: C30-C65 and C40-C54. The short motif at 54–65 is the Cx10C motif element; it reads CEWYQRVYQSLC.

It belongs to the cytochrome c oxidase subunit 6B family. In terms of assembly, component of the cytochrome c oxidase (complex IV, CIV), a multisubunit enzyme composed of 14 subunits. The complex is composed of a catalytic core of 3 subunits MT-CO1, MT-CO2 and MT-CO3, encoded in the mitochondrial DNA, and 11 supernumerary subunits COX4I1 (or COX4I2), COX5A, COX5B, COX6A1 (or COX6A2), COX6B1 (or COX6B2), COX6C, COX7A2 (or COX7A1), COX7B, COX7C, COX8A and NDUFA4, which are encoded in the nuclear genome. The complex exists as a monomer or a dimer and forms supercomplexes (SCs) in the inner mitochondrial membrane with NADH-ubiquinone oxidoreductase (complex I, CI) and ubiquinol-cytochrome c oxidoreductase (cytochrome b-c1 complex, complex III, CIII), resulting in different assemblies (supercomplex SCI(1)III(2)IV(1) and megacomplex MCI(2)III(2)IV(2)).

It localises to the mitochondrion inner membrane. It participates in energy metabolism; oxidative phosphorylation. Component of the cytochrome c oxidase, the last enzyme in the mitochondrial electron transport chain which drives oxidative phosphorylation. The respiratory chain contains 3 multisubunit complexes succinate dehydrogenase (complex II, CII), ubiquinol-cytochrome c oxidoreductase (cytochrome b-c1 complex, complex III, CIII) and cytochrome c oxidase (complex IV, CIV), that cooperate to transfer electrons derived from NADH and succinate to molecular oxygen, creating an electrochemical gradient over the inner membrane that drives transmembrane transport and the ATP synthase. Cytochrome c oxidase is the component of the respiratory chain that catalyzes the reduction of oxygen to water. Electrons originating from reduced cytochrome c in the intermembrane space (IMS) are transferred via the dinuclear copper A center (CU(A)) of subunit 2 and heme A of subunit 1 to the active site in subunit 1, a binuclear center (BNC) formed by heme A3 and copper B (CU(B)). The BNC reduces molecular oxygen to 2 water molecules using 4 electrons from cytochrome c in the IMS and 4 protons from the mitochondrial matrix. The sequence is that of Cytochrome c oxidase subunit 6B1 (COX6B1) from Homo sapiens (Human).